The chain runs to 102 residues: Small ribosomal subunit protein uS10 (102 aa).

The protein belongs to the universal ribosomal protein uS10 family. Part of the 30S ribosomal subunit.

Functionally, involved in the binding of tRNA to the ribosomes. This chain is Small ribosomal subunit protein uS10, found in Salinispora tropica (strain ATCC BAA-916 / DSM 44818 / JCM 13857 / NBRC 105044 / CNB-440).